The following is a 292-amino-acid chain: Probable serine/threonine-protein kinase FPV226 (292 aa).

In terms of domain architecture, Protein kinase spans 14-292 (WKIDKLIGCG…DLLRQLVNSL (279 aa)). ATP-binding positions include 20–28 (IGCGGFGCV) and Lys43. The active-site Proton acceptor is the Asp147.

This sequence belongs to the protein kinase superfamily. Ser/Thr protein kinase family. Poxviruses subfamily.

The catalysed reaction is L-seryl-[protein] + ATP = O-phospho-L-seryl-[protein] + ADP + H(+). The enzyme catalyses L-threonyl-[protein] + ATP = O-phospho-L-threonyl-[protein] + ADP + H(+). The protein is Probable serine/threonine-protein kinase FPV226 of Vertebrata (FPV).